The following is a 728-amino-acid chain: Phosphoribosylformylglycinamidine synthase subunit PurL (728 aa).

H42 is a catalytic residue. Positions 45 and 84 each coordinate ATP. Residue E86 participates in Mg(2+) binding. Residues 87 to 90 (SHNH) and R109 contribute to the substrate site. Residue H88 is the Proton acceptor of the active site. D110 serves as a coordination point for Mg(2+). A substrate-binding site is contributed by Q237. D265 provides a ligand contact to Mg(2+). 309–311 (ESQ) is a binding site for substrate. ATP-binding residues include D491 and G528. Residue N529 coordinates Mg(2+). S531 contributes to the substrate binding site.

This sequence belongs to the FGAMS family. Monomer. Part of the FGAM synthase complex composed of 1 PurL, 1 PurQ and 2 PurS subunits.

The protein resides in the cytoplasm. The catalysed reaction is N(2)-formyl-N(1)-(5-phospho-beta-D-ribosyl)glycinamide + L-glutamine + ATP + H2O = 2-formamido-N(1)-(5-O-phospho-beta-D-ribosyl)acetamidine + L-glutamate + ADP + phosphate + H(+). Its pathway is purine metabolism; IMP biosynthesis via de novo pathway; 5-amino-1-(5-phospho-D-ribosyl)imidazole from N(2)-formyl-N(1)-(5-phospho-D-ribosyl)glycinamide: step 1/2. In terms of biological role, part of the phosphoribosylformylglycinamidine synthase complex involved in the purines biosynthetic pathway. Catalyzes the ATP-dependent conversion of formylglycinamide ribonucleotide (FGAR) and glutamine to yield formylglycinamidine ribonucleotide (FGAM) and glutamate. The FGAM synthase complex is composed of three subunits. PurQ produces an ammonia molecule by converting glutamine to glutamate. PurL transfers the ammonia molecule to FGAR to form FGAM in an ATP-dependent manner. PurS interacts with PurQ and PurL and is thought to assist in the transfer of the ammonia molecule from PurQ to PurL. The polypeptide is Phosphoribosylformylglycinamidine synthase subunit PurL (Campylobacter jejuni subsp. jejuni serotype O:23/36 (strain 81-176)).